Reading from the N-terminus, the 276-residue chain is tRNA (guanine-N(7)-)-methyltransferase (276 aa).

Positions 1 to 23 are disordered; that stretch reads MRPDPAPLDPTDASPAQARRHQP. E103, E128, D155, and D178 together coordinate S-adenosyl-L-methionine. D178 is an active-site residue. Residues K182, D214, and 252–255 contribute to the substrate site; that span reads TRYE.

The protein belongs to the class I-like SAM-binding methyltransferase superfamily. TrmB family.

The enzyme catalyses guanosine(46) in tRNA + S-adenosyl-L-methionine = N(7)-methylguanosine(46) in tRNA + S-adenosyl-L-homocysteine. It participates in tRNA modification; N(7)-methylguanine-tRNA biosynthesis. Functionally, catalyzes the formation of N(7)-methylguanine at position 46 (m7G46) in tRNA. This chain is tRNA (guanine-N(7)-)-methyltransferase, found in Cutibacterium acnes (strain DSM 16379 / KPA171202) (Propionibacterium acnes).